Here is a 307-residue protein sequence, read N- to C-terminus: ATP synthase gamma chain (307 aa).

The protein belongs to the ATPase gamma chain family. F-type ATPases have 2 components, CF(1) - the catalytic core - and CF(0) - the membrane proton channel. CF(1) has five subunits: alpha(3), beta(3), gamma(1), delta(1), epsilon(1). CF(0) has three main subunits: a, b and c.

It is found in the cell membrane. Its function is as follows. Produces ATP from ADP in the presence of a proton gradient across the membrane. The gamma chain is believed to be important in regulating ATPase activity and the flow of protons through the CF(0) complex. The protein is ATP synthase gamma chain of Mycolicibacterium smegmatis (strain ATCC 700084 / mc(2)155) (Mycobacterium smegmatis).